The chain runs to 621 residues: Pre-mRNA-processing protein 45 (621 aa).

Disordered stretches follow at residues 1–73, 137–164, 220–251, 347–438, and 542–621; these read MSAT…YANG, SQRT…SNTE, AQRD…RSPP, RARE…ELRM, and GKND…EHDS. Residues 36–51 show a composition bias toward low complexity; it reads PSTSSSSSALVSTSSP. Composition is skewed to basic and acidic residues over residues 140 to 164 and 220 to 229; these read TDIK…SNTE and AQRDPLEPPR. Residues 239-248 are compositionally biased toward pro residues; it reads PPSPPPPVLR. Over residues 364 to 380 the composition is skewed to basic and acidic residues; that stretch reads GRDDDVASRLADSDARP. Positions 403–417 are enriched in acidic residues; sequence DSDESAASDEEDDEG. Basic and acidic residues-rich tracts occupy residues 418–437 and 594–621; these read ARER…RELR and EDAK…EHDS.

It belongs to the SNW family. In terms of assembly, associated with the spliceosome.

Its subcellular location is the nucleus. Involved in pre-mRNA splicing. The protein is Pre-mRNA-processing protein 45 (PRP45) of Mycosarcoma maydis (Corn smut fungus).